We begin with the raw amino-acid sequence, 349 residues long: B3 domain-containing protein At5g24050 (349 aa).

A DNA-binding region (TF-B3) is located at residues 240-341; it reads FNNLLRNDFL…ILCFAMEQSS (102 aa).

The protein resides in the nucleus. The protein is B3 domain-containing protein At5g24050 of Arabidopsis thaliana (Mouse-ear cress).